The primary structure comprises 763 residues: Putative alpha-1,3-mannosyltransferase MNN15 (763 aa).

The Cytoplasmic portion of the chain corresponds to 1–7 (MRFTLKK). A helical transmembrane segment spans residues 8 to 28 (IFFVFLTLLIISIGYLLLQSV). Over 29-763 (DLQRIRELLH…KDATTVRLRI (735 aa)) the chain is Lumenal. N71, N157, and N169 each carry an N-linked (GlcNAc...) asparagine glycan. Positions 617 to 659 (LVPPDLPNQREPGSPPDTKPEMEFRKSWKSRKKDTDEINEKLP) are disordered. The segment covering 649–659 (KDTDEINEKLP) has biased composition (basic and acidic residues).

This sequence belongs to the MNN1/MNT family.

Its subcellular location is the golgi apparatus membrane. It participates in protein modification; protein glycosylation. Responsible for addition of the terminal mannose residues to the outer chain of core N-linked polysaccharides and to O-linked mannotriose. Implicated in late Golgi modifications. This Candida albicans (strain SC5314 / ATCC MYA-2876) (Yeast) protein is Putative alpha-1,3-mannosyltransferase MNN15 (MNN15).